The sequence spans 67 residues: DNA-directed RNA polymerase subunit omega (67 aa).

It belongs to the RNA polymerase subunit omega family. As to quaternary structure, RNAP is composed of a core of 2 alpha, a beta and a beta' subunit. The core is associated with a delta subunit, and at least one of epsilon or omega. When a sigma factor is associated with the core the holoenzyme is formed, which can initiate transcription.

The enzyme catalyses RNA(n) + a ribonucleoside 5'-triphosphate = RNA(n+1) + diphosphate. Functionally, promotes RNA polymerase assembly. Latches the N- and C-terminal regions of the beta' subunit thereby facilitating its interaction with the beta and alpha subunits. In vitro reconstitution experiments this subunit is dispensible. This Bacillus subtilis (strain 168) protein is DNA-directed RNA polymerase subunit omega (rpoZ).